The following is a 189-amino-acid chain: Protein GrpE (189 aa).

Residues 1–24 form a disordered region; it reads MADEQNLDTQNPEAQAAENAAPSD. The segment covering 10 to 24 has biased composition (low complexity); sequence QNPEAQAAENAAPSD.

Belongs to the GrpE family. As to quaternary structure, homodimer.

Its subcellular location is the cytoplasm. Its function is as follows. Participates actively in the response to hyperosmotic and heat shock by preventing the aggregation of stress-denatured proteins, in association with DnaK and GrpE. It is the nucleotide exchange factor for DnaK and may function as a thermosensor. Unfolded proteins bind initially to DnaJ; upon interaction with the DnaJ-bound protein, DnaK hydrolyzes its bound ATP, resulting in the formation of a stable complex. GrpE releases ADP from DnaK; ATP binding to DnaK triggers the release of the substrate protein, thus completing the reaction cycle. Several rounds of ATP-dependent interactions between DnaJ, DnaK and GrpE are required for fully efficient folding. In Ectopseudomonas mendocina (strain ymp) (Pseudomonas mendocina), this protein is Protein GrpE.